A 475-amino-acid chain; its full sequence is ATP synthase subunit beta, chloroplastic (475 aa).

Position 156–163 (156–163 (GGAGVGKT)) interacts with ATP.

The protein belongs to the ATPase alpha/beta chains family. As to quaternary structure, F-type ATPases have 2 components, CF(1) - the catalytic core - and CF(0) - the membrane proton channel. CF(1) has five subunits: alpha(3), beta(3), gamma(1), delta(1), epsilon(1). CF(0) has four main subunits: a(1), b(1), b'(1) and c(9-12).

The protein resides in the plastid. Its subcellular location is the chloroplast thylakoid membrane. The catalysed reaction is ATP + H2O + 4 H(+)(in) = ADP + phosphate + 5 H(+)(out). Produces ATP from ADP in the presence of a proton gradient across the membrane. The catalytic sites are hosted primarily by the beta subunits. In Gracilaria tenuistipitata var. liui (Red alga), this protein is ATP synthase subunit beta, chloroplastic.